The sequence spans 178 residues: CDP-archaeol synthase (178 aa).

Transmembrane regions (helical) follow at residues 7 to 27 (LFVS…ACIF), 56 to 76 (FFGV…SNLG), 91 to 111 (VIIG…GSFL), 125 to 145 (VLDQ…YYLV), and 149 to 169 (ISIT…IIAY).

The protein belongs to the CDP-archaeol synthase family. Requires Mg(2+) as cofactor.

It is found in the cell membrane. It catalyses the reaction 2,3-bis-O-(geranylgeranyl)-sn-glycerol 1-phosphate + CTP + H(+) = CDP-2,3-bis-O-(geranylgeranyl)-sn-glycerol + diphosphate. It functions in the pathway membrane lipid metabolism; glycerophospholipid metabolism. In terms of biological role, catalyzes the formation of CDP-2,3-bis-(O-geranylgeranyl)-sn-glycerol (CDP-archaeol) from 2,3-bis-(O-geranylgeranyl)-sn-glycerol 1-phosphate (DGGGP) and CTP. This reaction is the third ether-bond-formation step in the biosynthesis of archaeal membrane lipids. This is CDP-archaeol synthase from Methanococcus vannielii (strain ATCC 35089 / DSM 1224 / JCM 13029 / OCM 148 / SB).